Here is an 855-residue protein sequence, read N- to C-terminus: Pre-mRNA-splicing factor SYF1 (855 aa).

9 HAT repeats span residues 15–47 (LVFEEEDLPYEEEIMRNQFSVKCWLRYIEFKQG), 48–80 (APKPRLNQLYERALKLLPCSYKLWYRYLKARRA), 90–122 (PAYEDVNNCHERAFVFMHKMPRLWLDYCQFLMD), 124–158 (GRVTHTRRTFDRALRALPITQHSRIWPLYLRFLRS), 160–192 (PLPETAVRGYRRFLKLSPESAEEYIEYLKSSDR), 198–230 (QRLATVVNDERFVSKAGKSNYQLWHELCDLISQ), 235–268 (VQSLNVDAIIRGGLTRFTDQLGKLWCSLADYYIR), 270–305 (GHFEKARDVYEEAIRTVMTVRDFTQVFDSYAQFEES), and 369–407 (GRPREIINTYTEAVQTVDPFKATGKPHTLWVAFAKFYED). Residue Lys-420 is modified to N6-acetyllysine. HAT repeat units lie at residues 498 to 530 (GTFQSTKAVYDRILDLRIATPQIVINYAMFLEE), 532 to 566 (KYFEESFKAYERGISLFKWPNVSDIWSTYLTKFIS), 571 to 605 (RKLERARDLFEQALDGCPPKYAKTLYLLYAQLEEE), 643 to 677 (YGVTHTRGIYQKAIEVLSDEHAREMCLRFADMECK), and 679 to 713 (GEIDRARAIYSFCSQICDPRTTGAFWQTWKDFEVR). A disordered region spans residues 808–855 (AELAQQANPEEIQLGEDEDEDEMDLEPNEVRLEQQSVPAAVFGSLKED). Residues 820 to 834 (QLGEDEDEDEMDLEP) show a composition bias toward acidic residues. Phosphoserine is present on Ser-851.

The protein belongs to the crooked-neck family. Associates with RNA polymerase II, the TCR-specific proteins CKN1/CSA and ERCC6/CSB, and XPA. Identified in the spliceosome C complex. Component of the XAB2 complex, a multimeric protein complex composed of XAB2, PRPF19, AQR, ZNF830, ISY1, and PPIE. Identified in a pentameric intron-binding (IB) complex composed of AQR, XAB2, ISY1, ZNF830 and PPIE that is incorporated into the spliceosome as a preassembled complex. The IB complex does not contain PRPF19.

The protein localises to the nucleus. Its function is as follows. Involved in pre-mRNA splicing as component of the spliceosome. Involved in transcription-coupled repair (TCR), transcription and pre-mRNA splicing. This Rattus norvegicus (Rat) protein is Pre-mRNA-splicing factor SYF1 (Xab2).